The sequence spans 361 residues: D-alanine--D-alanine ligase (361 aa).

One can recognise an ATP-grasp domain in the interval 139-336 (KLLLKEKEIS…FSQIIDNMIN (198 aa)). ATP is bound at residue 167 to 222 (EKNLGYPMIVKPARLGSSIGVSKVVDRKNFEEAVKNVLLFDNKVLVEKWINAREIN). Residues Asp-296, Glu-307, and Asn-309 each coordinate Mg(2+).

Belongs to the D-alanine--D-alanine ligase family. Mg(2+) serves as cofactor. It depends on Mn(2+) as a cofactor.

Its subcellular location is the cytoplasm. It carries out the reaction 2 D-alanine + ATP = D-alanyl-D-alanine + ADP + phosphate + H(+). The protein operates within cell wall biogenesis; peptidoglycan biosynthesis. In terms of biological role, cell wall formation. This is D-alanine--D-alanine ligase from Thermosipho melanesiensis (strain DSM 12029 / CIP 104789 / BI429).